Reading from the N-terminus, the 1261-residue chain is AT-rich interactive domain-containing protein 4A (1261 aa).

The interval 4-121 (ADEPAYLTVG…RHFAESETLD (118 aa)) is DNA-binding. 3 disordered regions span residues 142 to 169 (RGRRSSLPITEDEKEEESSEEEDEDKRR), 273 to 310 (ESSSSDDEECPAEEHEEEKEKEAKKEEEELPEEELDPE), and 435 to 470 (APEMPLLDVKSEPEENTDSNSESDREDTELKSPRGR). Acidic residues-rich tracts occupy residues 151–165 (TEDEKEEESSEEEDE) and 276–289 (SSDDEECPAEEHEE). Over residues 290–299 (EKEKEAKKEE) the composition is skewed to basic and acidic residues. Over residues 300–310 (EELPEEELDPE) the composition is skewed to acidic residues. In terms of domain architecture, ARID spans 309-401 (PEERDNFLQQ…YLYGFEEYCR (93 aa)). Residue lysine 481 forms a Glycyl lysine isopeptide (Lys-Gly) (interchain with G-Cter in SUMO2) linkage. 3 disordered regions span residues 498–582 (LENK…GTKV), 633–768 (WPLD…EAGD), and 842–953 (FSST…EDAM). The span at 512 to 522 (PAAKREHELLF) shows a compositional bias: basic and acidic residues. The segment covering 526 to 536 (STPKNKEKKIK) has biased composition (basic residues). Over residues 541 to 551 (SERDSDEEEEK) the composition is skewed to acidic residues. Over residues 552–564 (SQEREETESRCDS) the composition is skewed to basic and acidic residues. Residues 565–574 (EGEDEEDDTE) show a composition bias toward acidic residues. Residues 579 to 631 (GTKVKVKYGRGKTQKIYEASIKSTEMDDGEILYLVHYYGWNVRYDEWVKADRI) enclose the Tudor-knot domain. Residues 640-649 (PKKKQKKKVK) show a composition bias toward basic residues. A compositionally biased stretch (basic and acidic residues) spans 650–665 (NKEDSEKDEKRDEERQ). Residues 676–689 (STFSPNMPYSLSKT) are compositionally biased toward polar residues. The residue at position 679 (serine 679) is a Phosphoserine. Residues 690–702 (SNSEGKSDSCSSD) are compositionally biased toward low complexity. The span at 708-753 (QLEKSSGGEDLSPDVKEELEKNENAHDDKLDEENPKIVHISKENDR) shows a compositional bias: basic and acidic residues. Serine 719 is modified (phosphoserine). Residues lysine 723 and lysine 743 each participate in a glycyl lysine isopeptide (Lys-Gly) (interchain with G-Cter in SUMO2) cross-link. Serine 867 is subject to Phosphoserine. 2 stretches are compositionally biased toward basic and acidic residues: residues 899–909 (KGAHVEQHFET) and 929–947 (TSEKSDSPAEEEPVHTPLK). The segment at 955–968 (LIGPETLVCHEVDL) is retinoblastoma protein binding. Positions 1067 to 1080 (HERESREKGQKRPS) are enriched in basic and acidic residues. Disordered stretches follow at residues 1067-1173 (HERE…RTYK) and 1216-1261 (RRRK…VECR). Serine 1113 and serine 1149 each carry phosphoserine. Residues 1230-1252 (HAGASMSSASSDTGMSPSSSSPP) are compositionally biased toward low complexity.

In terms of assembly, identified in mSin3A corepressor complexes together with SIN3A, SIN3B, RBBP4, RBBP7, SAP30, BRMS1, HDAC1 and HDAC2. Interacts with BRMS1. Interacts with RB1. Interacts with ARID4B. Interacts with AR. In terms of tissue distribution, expressed in Sertoli cells of the testis.

The protein localises to the nucleus. Its function is as follows. DNA-binding protein which modulates activity of several transcription factors including RB1 (retinoblastoma-associated protein) and AR (androgen receptor). May function as part of an mSin3A repressor complex. Has no intrinsic transcriptional activity. Plays a role in the regulation of epigenetic modifications at the PWS/AS imprinting center near the SNRPN promoter, where it might function as part of a complex with RB1 and ARID4B. Involved in spermatogenesis, together with ARID4B, where it acts as a transcriptional coactivator for AR and enhances expression of genes required for sperm maturation. Regulates expression of the tight junction protein CLDN3 in the testis, which is important for integrity of the blood-testis barrier. Plays a role in myeloid homeostasis where it regulates the histone methylation state of bone marrow cells and expression of various genes involved in hematopoiesis. May function as a leukemia suppressor. The sequence is that of AT-rich interactive domain-containing protein 4A from Mus musculus (Mouse).